Reading from the N-terminus, the 559-residue chain is Dihydroxy-acid dehydratase (559 aa).

Asp81 contacts Mg(2+). Residue Cys122 coordinates [2Fe-2S] cluster. Residues Asp123 and Lys124 each contribute to the Mg(2+) site. Lys124 carries the N6-carboxylysine modification. Cys195 contributes to the [2Fe-2S] cluster binding site. Position 448 (Glu448) interacts with Mg(2+). Ser474 acts as the Proton acceptor in catalysis.

The protein belongs to the IlvD/Edd family. In terms of assembly, homodimer. The cofactor is [2Fe-2S] cluster. Mg(2+) is required as a cofactor.

It carries out the reaction (2R)-2,3-dihydroxy-3-methylbutanoate = 3-methyl-2-oxobutanoate + H2O. The catalysed reaction is (2R,3R)-2,3-dihydroxy-3-methylpentanoate = (S)-3-methyl-2-oxopentanoate + H2O. It participates in amino-acid biosynthesis; L-isoleucine biosynthesis; L-isoleucine from 2-oxobutanoate: step 3/4. The protein operates within amino-acid biosynthesis; L-valine biosynthesis; L-valine from pyruvate: step 3/4. Functionally, functions in the biosynthesis of branched-chain amino acids. Catalyzes the dehydration of (2R,3R)-2,3-dihydroxy-3-methylpentanoate (2,3-dihydroxy-3-methylvalerate) into 2-oxo-3-methylpentanoate (2-oxo-3-methylvalerate) and of (2R)-2,3-dihydroxy-3-methylbutanoate (2,3-dihydroxyisovalerate) into 2-oxo-3-methylbutanoate (2-oxoisovalerate), the penultimate precursor to L-isoleucine and L-valine, respectively. The chain is Dihydroxy-acid dehydratase from Geobacillus kaustophilus (strain HTA426).